Consider the following 99-residue polypeptide: Large ribosomal subunit protein bL28 (99 aa).

It belongs to the bacterial ribosomal protein bL28 family.

The sequence is that of Large ribosomal subunit protein bL28 from Rhodospirillum rubrum (strain ATCC 11170 / ATH 1.1.1 / DSM 467 / LMG 4362 / NCIMB 8255 / S1).